Consider the following 710-residue polypeptide: Chaperonin-containing T-complex member BBS12 (710 aa).

It belongs to the TCP-1 chaperonin family. BBS12 subfamily. As to quaternary structure, component of the chaperonin-containing T-complex (TRiC), a heterooligomeric complex of about 850 to 900 kDa that forms two stacked rings, 12 to 16 nm in diameter. Interacts with MKKS.

The protein resides in the cell projection. Its subcellular location is the cilium. In terms of biological role, component of the chaperonin-containing T-complex (TRiC), a molecular chaperone complex that assists the folding of proteins upon ATP hydrolysis. As part of the TRiC complex may play a role in the assembly of BBSome, a complex involved in ciliogenesis regulating transports vesicles to the cilia. Involved in adipogenic differentiation. The polypeptide is Chaperonin-containing T-complex member BBS12 (BBS12) (Pongo abelii (Sumatran orangutan)).